Consider the following 529-residue polypeptide: Phenylalanine N-monooxygenase (529 aa).

Residues 1–21 form a helical membrane-spanning segment; that stretch reads MLDSTPMLAFIIGLLLLALTM. Residue cysteine 467 coordinates heme.

This sequence belongs to the cytochrome P450 family. It depends on heme as a cofactor.

It is found in the endoplasmic reticulum membrane. It catalyses the reaction L-phenylalanine + 2 reduced [NADPH--hemoprotein reductase] + 2 O2 = (E)-phenylacetaldehyde oxime + 2 oxidized [NADPH--hemoprotein reductase] + CO2 + 3 H2O + 2 H(+). The protein operates within secondary metabolite biosynthesis; phenylglucosinolate biosynthesis. Functionally, converts L-phenylalanine into phenylacetaldoxime, the precursor of benzylglucosinolate (glucotropeolin). The sequence is that of Phenylalanine N-monooxygenase (CYP79A2) from Arabidopsis thaliana (Mouse-ear cress).